Consider the following 144-residue polypeptide: Dynein light chain Tctex-type protein 2B (144 aa).

The protein belongs to the dynein light chain Tctex-type family. Light chain of the cytoplasmic dynein complex 2, a multisubunit complex composed at least of eleven different proteins. The cytoplasmic dynein 2 complex consists of two catalytic heavy chains (HCs) and a number of non-catalytic subunits presented by intermediate chains (ICs), light intermediate chains (LICs) and light chains (LCs). Among them, a heavy chain (DYNC2H1), two intermediate chains (DYNC2I2 and DYNC2I1), a light intermediate chain (DYNC2LI1), and a light chain (DYNLT2B) are unique to the dynein-2 complex, but a subset of the light chains are also shared by dynein-1 and dynein-2 complexes. The dimer DYNLT2B-DYNLT1/DYNLT3 interacts with DYNC2I1; this interaction is crucial for retrograde trafficking of ciliary proteins.

The protein resides in the dynein axonemal particle. In terms of biological role, acts as one of several non-catalytic accessory components of the cytoplasmic dynein 2 complex (dynein-2 complex), a motor protein complex that drives the movement of cargos along microtubules within cilia and flagella in concert with the intraflagellar transport (IFT) system. Required for proper retrograde ciliary transport. This is Dynein light chain Tctex-type protein 2B (Dynlt2b) from Mus musculus (Mouse).